Reading from the N-terminus, the 1187-residue chain is Metabotropic glutamate receptor-like protein Q (1187 aa).

The Extracellular portion of the chain corresponds to 1-735 (MRLFFKFFYL…TIETSNIAKT (735 aa)). 14 N-linked (GlcNAc...) asparagine glycosylation sites follow: Asn35, Asn44, Asn55, Asn177, Asn258, Asn275, Asn397, Asn402, Asn462, Asn526, Asn527, Asn557, Asn562, and Asn684. A helical membrane pass occupies residues 736 to 756 (VMIITTSILVLLILLCFGITI). Residues 757–768 (AYSKEKVINFGN) are Cytoplasmic-facing. The helical transmembrane segment at 769–789 (IVFLILMLFSCLFLCIIIYVS) threads the bilayer. At 790–796 (IEPTNFS) the chain is on the extracellular side. Asn794 is a glycosylation site (N-linked (GlcNAc...) asparagine). A helical transmembrane segment spans residues 797–817 (CQFSAIVFPIGIGILFTLTLL). The Cytoplasmic portion of the chain corresponds to 818–843 (KQYKIYKLFKYSDFLKINTDNLKMVK). The chain crosses the membrane as a helical span at residues 844-864 (YAGLIMVPVFLLVLIGVIVYP). Over 865–888 (SKPTFILDLHTKTATKYCISRKYY) the chain is Extracellular. The chain crosses the membrane as a helical span at residues 889 to 909 (VFSIVIVVYEVIILLTSCFIA). Residues 910–925 (MKSKRYHSTPGTFYES) are Cytoplasmic-facing. The chain crosses the membrane as a helical span at residues 926–946 (LFNSILIYNYTLVFIVLIPLF). At 947–955 (YTLQNNPTT) the chain is on the extracellular side. The helical transmembrane segment at 956 to 976 (IYLIYSIGSSILVFATLSIIF) threads the bilayer. At 977-1095 (IPKINFLFRR…SPSSQSIDFL (119 aa)) the chain is on the cytoplasmic side. Residues 1074 to 1105 (IYPNQIPKQTTNSPSSQSIDFLNNPTIPKNKS) show a composition bias toward polar residues. The segment at 1074–1187 (IYPNQIPKQT…RKSMDPSLDS (114 aa)) is disordered. Positions 1114-1124 (KKPKKKLKSKI) are enriched in basic residues. The span at 1125 to 1174 (ISKSANSSPNINNNTINNNNNNNNNNNNNNNNNNNNNNINNNNNNNININ) shows a compositional bias: low complexity.

The protein belongs to the G-protein coupled receptor 3 family. GABA-B receptor subfamily.

Its subcellular location is the membrane. The polypeptide is Metabotropic glutamate receptor-like protein Q (grlQ) (Dictyostelium discoideum (Social amoeba)).